A 707-amino-acid polypeptide reads, in one-letter code: G protein-coupled receptor kinase 2 (707 aa).

Positions 1–190 are N-terminal; sequence MADLEAVLAD…ELNMQLTMND (190 aa). Residues 54-175 enclose the RGS domain; sequence KFDKIFNQKL…LESDKFTRFC (122 aa). Residues 191-455 form the Protein kinase domain; that stretch reads FSVHRIIGRG…PTEVKEHPFF (265 aa). ATP is bound by residues 197–205 and Lys220; that span reads IGRGGFGEV. Asp318 (proton acceptor) is an active-site residue. Positions 456 to 523 constitute an AGC-kinase C-terminal domain; sequence KDVDWQTVYL…VISERWQNEI (68 aa). The region spanning 558–658 is the PH domain; it reads DVIVHGYIKK…WHTSLRTAHK (101 aa).

It belongs to the protein kinase superfamily. AGC Ser/Thr protein kinase family. GPRK subfamily. Interacts with amx-2; the interaction promotes phosphorylation of amx-2. As to expression, expressed in many neurons in the adult including the ASH neurons and other sensory neurons, many interneurons, and motor neurons of the ventral nerve cord. Expressed broadly in head neurons and is detected in several head acetylcholine neurons including the AVA, AVB, AVD and AVE premotor interneurons, the SMD and RMD head motor neurons, and the AIN, AIY, SIA, SIB and SAA interneurons. Expressed in HSN motor neurons and VC4/VC5 motor neurons. Also expressed in vulval muscle cells. Expressed in premotor and RIS interneurons. Expressed in ciliated neurons such as AWA, AWB, AWC, ASH and ADF olfactory and nociceptive neurons, and in chemosensory ASH neurons. Expressed in RMG neurons and AVK interneurons.

The catalysed reaction is [G-protein-coupled receptor] + ATP = [G-protein-coupled receptor]-phosphate + ADP + H(+). Specifically phosphorylates the activated forms of G protein-coupled receptors. Required in adult sensory neurons for chemotaxis. Plays a role in the ASH sensory neurons in the chemotaxis response to NaCl where it is likely to modulate the strength of the NaCl avoidance response which occurs at high NaCl concentrations. Required in the HSN motor neurons for normal egg laying by promoting phosphorylation of amine oxidase amx-2 which inhibits amx-2 activity, preventing metabolism of serotonin. Acts in head acetylcholine neurons to positively regulate locomotion. Inactivates dopamine receptor dop-3 which leads to inactivation of guanine nucleotide-binding protein G(o) subunit goa-1 and activation of the unc-77/nca-1 and nca-2 ion channel proteins. Acts as a positive regulator of swimming by inactivating two dopamine receptors, dop-3 in the premotor interneurons that negatively controls early swimming through the nca ion channel, and dop-1 in the RIS neuron that inhibits late-stage swimming via the signaling of FMRFamide-like neuropeptide flp-11. Controls movement quiescence by negatively regulating multiple targets including egl-4 in ciliated neurons, the level of ligands of the neuropeptide receptor npr-1 in RMG neurons, and the secretion of flp-1 from AVK interneurons. The sequence is that of G protein-coupled receptor kinase 2 (grk-2) from Caenorhabditis elegans.